Reading from the N-terminus, the 349-residue chain is 6-phosphogluconolactonase (349 aa).

The interval 125 to 151 (LQSPVSEAAHTGKGPHERQEKPHTHYA) is disordered. A compositionally biased stretch (basic and acidic residues) spans 138–147 (GPHERQEKPH).

The protein belongs to the cycloisomerase 2 family.

It carries out the reaction 6-phospho-D-glucono-1,5-lactone + H2O = 6-phospho-D-gluconate + H(+). The protein operates within carbohydrate degradation; pentose phosphate pathway; D-ribulose 5-phosphate from D-glucose 6-phosphate (oxidative stage): step 2/3. In terms of biological role, catalyzes the hydrolysis of 6-phosphogluconolactone to 6-phosphogluconate. The protein is 6-phosphogluconolactonase (pgl) of Bacillus subtilis (strain 168).